The chain runs to 1099 residues: MSQPGIPASGGSSTGLQAQNGAASASGSPYTNGPVQNALMSSQVSVSQGYNSQLPGSYPHLIPAKTLNPVSGQSNSGGSQTVSPLSNYQGPGQALYGPPVASHPVTPSLHSGPSPQMPLPTSQNPAATPMPSGSFLPGASVSSPSNWQYNYLSQTNHCPRASSQPTMTGNTNLMSPQYVSSGDSSLQNNIIKSGSALPLVNPPLPTTFQPGAPLGPPPTGGPPPVRALTPQKLTPRTMPQPSFNSTSNQEGIISNTNNGSMVVHNNYDEIEGGGFLATSQPTTKNPTMSRSVGYSYPSLPPGYQNTAPPSTTGAGLPPSSLNYPSGPQAFTQTPLGANHLTSSMSGLSLHPEGLRVINLLQERNMLPSTPLQPPVPNLHEDIQKLNCNPELFRCTLTSIPQTQALLNKAKLPLGLLLHPFKDLVQLPVVTSSTIVRCRSCRTYINPFVSFLDQRRWKCNLCYRVNDVPEEFMYNPLTRVYGEPHRRPEVQNATIEFMAPSEYMLRPPQPPVYLFVFDVSHNAIETGYLNSVCQSLLDNLDLLPGNTRTKIGFITFDSTIHFYSLQEGLSQPQMLIVSDIEDVFIPMPENLLVNLNESKELVQDLLKTLPQMFTKTLETQSALGPALQAAFKLMSPTGGRMSVFQTQLPTLGVGALKPREEPNQRSSAKEIHLTPSTDFYKKLALDCSGQQVAVDLFLLSGQYSDLASLGCISRYSAGSVYYYPSYHHQHNPIQVQKLEKELQRYLTRKIGFEAVMRIRCTKGLSIHTFHGNFFVRSTDLLSLPNVNPDAGYAVQMSVEESLTDTQLVSFQSALLYTSSKGERRIRVHTLCLPVVSTLNEVFLGADVQAISGLLANMAVDRSVTASLSDARDALVNAVIDSLSAYRSSALSNQQPGLMVPFSLRLFPLFVLALLKQKSFQTGTNARLDERIFAMCQVKNQPLVYLMLTTHPSLYRVDNLSDEGAISINDRTIPQPPILQLSVEKLSRDGAFLMDAGSVLMLWVGRNCGQNFLSQVLGVENYALIPQTMTDLPELDTPESARTIAFISWLREQRPFYPILYVIRDESPMKANFLQNMVEDRTESALSYYEFLLHIQQQVNK.

Disordered stretches follow at residues 1–36 (MSQPGIPASGGSSTGLQAQNGAASASGSPYTNGPVQ), 65–139 (KTLN…LPGA), and 279–317 (SQPTTKNPTMSRSVGYSYPSLPPGYQNTAPPSTTGAGLP). Polar residues-rich tracts occupy residues 10-20 (GGSSTGLQAQN), 68-90 (NPVSGQSNSGGSQTVSPLSNYQG), 108-126 (SLHSGPSPQMPLPTSQNPA), 279-292 (SQPTTKNPTMSRSV), and 303-317 (YQNTAPPSTTGAGLP). The Zn(2+) site is built by cysteine 437, cysteine 440, cysteine 458, and cysteine 461. The tract at residues 437-461 (CRSCRTYINPFVSFLDQRRWKCNLC) is zinc finger-like. The stretch at 972–1044 (PQPPILQLSV…TPESARTIAF (73 aa)) is one Gelsolin-like repeat.

The protein belongs to the SEC23/SEC24 family. SEC24 subfamily. As to quaternary structure, COPII is composed of at least five proteins: the Sec23/24 complex, the Sec13/31 complex and Sar1. Interacts with TMED2. Interacts (as part of the Sec23/24 complex) with SEC22B; recruits SEC22B into COPII-coated vesicles for its transport from the endoplasmic reticulum to the Golgi. Interacts with STING1; promoting STING1 translocation to COPII vesicles in a STEEP1-dependent manner. Interacts with TMEM39A. Interacts with SACM1L; this interaction is reduced in the absence of TMEM39A. Interacts with kinase FAM20C; transport of FAM20C from the endoplasmic reticulum to the Golgi is likely to be mediated by COPII vesicles.

The protein resides in the cytoplasmic vesicle. It is found in the COPII-coated vesicle membrane. Its subcellular location is the endoplasmic reticulum membrane. The protein localises to the cytoplasm. It localises to the cytosol. Functionally, component of the coat protein complex II (COPII) which promotes the formation of transport vesicles from the endoplasmic reticulum (ER). The coat has two main functions, the physical deformation of the endoplasmic reticulum membrane into vesicles and the selection of cargo molecules for their transport to the Golgi complex. Plays a central role in cargo selection within the COPII complex and together with SEC24B may have a different specificity compared to SEC24C and SEC24D. May package preferentially cargos with cytoplasmic DxE or LxxLE motifs and may also recognize conformational epitopes. In Bos taurus (Bovine), this protein is Protein transport protein Sec24A.